Consider the following 329-residue polypeptide: MHITYDLPVAIDDIIEAKQRLAGRIYKTGMPRSNYFSERCKGEIFLKFENMQRTGSFKIRGAFNKLSSLTDAEKRKGVVACSAGNHAQGVSLSCAMLGIDGKVVMPKGAPKSKVAATCDYSAEVVLHGDNFNDTIAKVSEIVEMEGRIFIPPYDDPKVIAGQGTIGLEIMEDLYDVDNVIVPIGGGGLIAGIAVAIKSINPTIRVIGVQSENVHGMAASFHSGEITTHRTTGTLADGCDVSRPGNLTYEIVRELVDDIVLVSEDEIRNSMIALIQRNKVVTEGAGALACAALLSGKLDQYIQNRKTVSIISGGNIDLSRVSQITGFVDA.

53–54 is a binding site for AMP; it reads RT. N6-(pyridoxal phosphate)lysine is present on K58. AMP is bound by residues Q88, 119 to 120, and N314; that span reads DY.

This sequence belongs to the serine/threonine dehydratase family. As to quaternary structure, in the native structure, TdcB is in a dimeric form, whereas in the TdcB-AMP complex, it exists in a tetrameric form (dimer of dimers). The cofactor is pyridoxal 5'-phosphate.

The catalysed reaction is L-threonine = 2-oxobutanoate + NH4(+). It carries out the reaction L-serine = pyruvate + NH4(+). Its pathway is amino-acid degradation; L-threonine degradation via propanoate pathway; propanoate from L-threonine: step 1/4. With respect to regulation, each protein molecule can bind up to four molecules of AMP, which act as an allosteric activator to the enzyme. Catalyzes the anaerobic formation of alpha-ketobutyrate and ammonia from threonine in a two-step reaction. The first step involved a dehydration of threonine and a production of enamine intermediates (aminocrotonate), which tautomerizes to its imine form (iminobutyrate). Both intermediates are unstable and short-lived. The second step is the nonenzymatic hydrolysis of the enamine/imine intermediates to form 2-ketobutyrate and free ammonia. In the low water environment of the cell, the second step is accelerated by RidA. TdcB also dehydrates serine to yield pyruvate via analogous enamine/imine intermediates. In Escherichia coli O157:H7, this protein is L-threonine dehydratase catabolic TdcB (tdcB).